Reading from the N-terminus, the 378-residue chain is Cobalt-precorrin-5B C(1)-methyltransferase (378 aa).

This sequence belongs to the CbiD family.

The catalysed reaction is Co-precorrin-5B + S-adenosyl-L-methionine = Co-precorrin-6A + S-adenosyl-L-homocysteine. Its pathway is cofactor biosynthesis; adenosylcobalamin biosynthesis; cob(II)yrinate a,c-diamide from sirohydrochlorin (anaerobic route): step 6/10. In terms of biological role, catalyzes the methylation of C-1 in cobalt-precorrin-5B to form cobalt-precorrin-6A. This is Cobalt-precorrin-5B C(1)-methyltransferase from Tolumonas auensis (strain DSM 9187 / NBRC 110442 / TA 4).